Reading from the N-terminus, the 67-residue chain is Large ribosomal subunit protein uL30 (67 aa).

The protein belongs to the universal ribosomal protein uL30 family. Part of the 50S ribosomal subunit.

The protein is Large ribosomal subunit protein uL30 of Hamiltonella defensa subsp. Acyrthosiphon pisum (strain 5AT).